Consider the following 353-residue polypeptide: Phospho-furanose lactonase (353 aa).

Zn(2+) contacts are provided by H24, H26, K153, H186, and H214. K153 carries the N6-carboxylysine modification. 244–245 (KY) lines the substrate pocket. Zn(2+) is bound at residue D272. A substrate-binding site is contributed by 275–278 (RILY).

It belongs to the metallo-dependent hydrolases superfamily. Phosphotriesterase family. Requires Zn(2+) as cofactor.

The enzyme catalyses a 1,4-lactone + H2O = a 4-hydroxyacid + H(+). It catalyses the reaction D-xylono-1,4-lactone 5-phosphate + H2O = 5-phospho-D-xylonate + H(+). It carries out the reaction L-arabino-1,4-lactone 5-phosphate + H2O = 5-phospho-L-arabinonate + H(+). Catalyzes the hydrolysis of D-xylono-1,4-lactone-5-phosphate and L-arabino-1,4-lactone-5-phosphate. Also able to hydrolyze carboxy 1,4-lactones. The protein is Phospho-furanose lactonase of Mycoplasmopsis synoviae (strain 53) (Mycoplasma synoviae).